Here is a 690-residue protein sequence, read N- to C-terminus: Beta-galactosidase (690 aa).

N173 lines the substrate pocket. E174 functions as the Proton donor in the catalytic mechanism. Residue W345 participates in substrate binding.

It belongs to the glycosyl hydrolase 42 family.

The catalysed reaction is Hydrolysis of terminal non-reducing beta-D-galactose residues in beta-D-galactosides.. Activity stimulated by beta-mercaptoethanol. Highly specific towards beta-D-galactoside substrates. Hydrolyzes 5-bromo-4-chloro-3-indolyl-beta-D-galactopyranoside (X-Gal) and o-nitrophenyl-beta-D-galactopyranoside (ONPG). Has activity against p-nitrophenyl(pNP)-beta-D-galactoside, but not significantly at all towards pNP-alpha-D-galactoside, pNP-beta-D-glucoside, pNP-beta-D-mannoside, pNP-beta-L-fucoside, pNP-beta-D-xyloside, pNP-beta-L-arabinoside, pNP-beta-D-galuronide, pNP-beta-D-glucuronide, pNP-beta-D-lactoside or pNP-beta-D-cellobioside. The protein is Beta-galactosidase of Arthrobacter sp.